The following is an 854-amino-acid chain: Probable inorganic carbon transporter subunit DabA (854 aa).

Positions 378, 380, 560, and 575 each coordinate Zn(2+).

Belongs to the inorganic carbon transporter (TC 9.A.2) DabA family. Forms a complex with DabB. The cofactor is Zn(2+).

It is found in the cell membrane. In terms of biological role, part of an energy-coupled inorganic carbon pump. The polypeptide is Probable inorganic carbon transporter subunit DabA (Bacillus cereus (strain ATCC 14579 / DSM 31 / CCUG 7414 / JCM 2152 / NBRC 15305 / NCIMB 9373 / NCTC 2599 / NRRL B-3711)).